Consider the following 140-residue polypeptide: Large ribosomal subunit protein uL13 (140 aa).

Part of the 50S ribosomal subunit.

In terms of biological role, this protein is one of the early assembly proteins of the 50S ribosomal subunit, although it is not seen to bind rRNA by itself. It is important during the early stages of 50S assembly. This chain is Large ribosomal subunit protein uL13, found in Thermus thermophilus (strain ATCC 27634 / DSM 579 / HB8).